The following is a 362-amino-acid chain: MDKFWWHAAWGLCLLPLSLAHEQIDLNITCRYAGVFHVEKNGRYSISRTEAADLCQAFNSTLPTMDQMVMALSKGFETCRYGFIEGHVVIPRIQPNAICAANHTGVYILTSNTSHYDTYCFNASAPLEEDCTSVTDLPNSFEGPVTITIVNRDGTRYSKKGEYRTHQEDIDASNTTDDDVSSGSSSEKSTSGGYVFHTYLPTIHSTADQDDPYFIGSTMATRDQDSSMDPRGNSLTVTDGSKLTEHSSGNQDSGLNSTSRPGGKPRVPEWLIVLASLLALALILAVCIAVNSRRRCGQKKKLVINSGNGKVEDRKPSELNGEASKSQEMVHLVNKEPSETPDQFMTADETRNLQNVDMKIGV.

The signal sequence occupies residues 1–22 (MDKFWWHAAWGLCLLPLSLAHE). At 23-269 (QIDLNITCRY…RPGGKPRVPE (247 aa)) the chain is on the extracellular side. Asparagine 27 carries an N-linked (GlcNAc...) asparagine glycan. 3 disulfide bridges follow: cysteine 30-cysteine 131, cysteine 55-cysteine 120, and cysteine 79-cysteine 99. Positions 34–122 (GVFHVEKNGR…TSHYDTYCFN (89 aa)) constitute a Link domain. A hyaluronan-binding site is contributed by arginine 43. An N-linked (GlcNAc...) asparagine glycan is attached at asparagine 59. Hyaluronan contacts are provided by arginine 80 and tyrosine 81. Asparagine 102 carries N-linked (GlcNAc...) asparagine glycosylation. Hyaluronan is bound at residue tyrosine 107. N-linked (GlcNAc...) asparagine glycosylation is found at asparagine 112 and asparagine 122. Over residues 158–169 (SKKGEYRTHQED) the composition is skewed to basic and acidic residues. Disordered regions lie at residues 158-190 (SKKG…EKST) and 211-263 (DPYF…RPGG). Asparagine 174 is a glycosylation site (N-linked (GlcNAc...) asparagine). Residues 181–190 (SSGSSSEKST) show a composition bias toward low complexity. O-linked (Xyl...) (chondroitin sulfate) serine glycosylation occurs at serine 182. Residues 226-269 (SSMDPRGNSLTVTDGSKLTEHSSGNQDSGLNSTSRPGGKPRVPE) form a stem region. The span at 233–260 (NSLTVTDGSKLTEHSSGNQDSGLNSTSR) shows a compositional bias: polar residues. Asparagine 256 carries an N-linked (GlcNAc...) asparagine glycan. A helical membrane pass occupies residues 270 to 290 (WLIVLASLLALALILAVCIAV). The Cytoplasmic segment spans residues 291-362 (NSRRRCGQKK…LQNVDMKIGV (72 aa)). Serine 292 is modified (phosphoserine; by PKC). Residues 293 to 311 (RRRCGQKKKLVINSGNGKV) form a required for interaction with EZR, MSN and RDX and for co-localization to microvilli region. Serine 306, serine 317, and serine 326 each carry phosphoserine. Residues 307 to 327 (GNGKVEDRKPSELNGEASKSQ) are disordered.

In terms of assembly, interacts with PKN2. Interacts with TIAM1 and TIAM2. Interacts with HA, as well as other glycosaminoglycans, collagen, laminin, and fibronectin via its N-terminal segment. Interacts with UNC119. Interacts with PDPN (via extracellular domain); this interaction is required for PDPN-mediated directional migration and regulation of lamellipodia extension/stabilization during cell spreading and migration. Interacts with RDX, EZR and MSN. Interacts with EGFR. Interacts with CD74; this complex is essential for the MIF-induced signaling cascade that results in B cell survival. In terms of processing, phosphorylated; activation of PKC results in the dephosphorylation of Ser-326 (constitutive phosphorylation site), and the phosphorylation of Ser-292. Post-translationally, N-glycosylated. O-glycosylated; contains chondroitin sulfate glycans which can be more or less sulfated.

It localises to the cell membrane. The protein resides in the cell projection. It is found in the microvillus. The protein localises to the secreted. Its function is as follows. Cell-surface receptor that plays a role in cell-cell interactions, as well as cell adhesion and migration, helping them to sense and respond to changes in the tissue microenvironment. Participates thereby in a wide variety of cellular functions including the activation, recirculation and homing of T-lymphocytes, hematopoiesis, inflammation and response to bacterial infection. Engages, through its ectodomain, extracellular matrix components such as hyaluronan/HA, collagen, growth factors, cytokines or proteases and serves as a platform for signal transduction by assembling, via its cytoplasmic domain, protein complexes containing receptor kinases and membrane proteases. Such effectors include PKN2, the RhoGTPases RAC1 and RHOA, Rho-kinases and phospholipase C that coordinate signaling pathways promoting calcium mobilization and actin-mediated cytoskeleton reorganization essential for cell migration and adhesion. In Cricetulus griseus (Chinese hamster), this protein is CD44 antigen (CD44).